The following is a 146-amino-acid chain: Flagellar assembly factor FliW (146 aa).

This sequence belongs to the FliW family. As to quaternary structure, interacts with translational regulator CsrA and flagellin(s).

The protein localises to the cytoplasm. In terms of biological role, acts as an anti-CsrA protein, binds CsrA and prevents it from repressing translation of its target genes, one of which is flagellin. Binds to flagellin and participates in the assembly of the flagellum. The chain is Flagellar assembly factor FliW from Shouchella clausii (strain KSM-K16) (Alkalihalobacillus clausii).